We begin with the raw amino-acid sequence, 85 residues long: uncharacterized protein (85 aa).

Residues 64 to 76 are compositionally biased toward basic and acidic residues; it reads DPPVRRSGGREQH. The tract at residues 64–85 is disordered; it reads DPPVRRSGGREQHLAQVWRATS.

This is an uncharacterized protein from Mycobacterium bovis (strain ATCC BAA-935 / AF2122/97).